We begin with the raw amino-acid sequence, 157 residues long: Large ribosomal subunit protein uL15 (157 aa).

The protein belongs to the universal ribosomal protein uL15 family. In terms of assembly, part of the 50S ribosomal subunit.

Binds to the 23S rRNA. This is Large ribosomal subunit protein uL15 from Ehrlichia ruminantium (strain Gardel).